The chain runs to 570 residues: 15-cis-phytoene desaturase, chloroplastic/chromoplastic (570 aa).

The N-terminal 91 residues, 1-91 (MSIVGLVSVV…AQLSASFRSS (91 aa)), are a transit peptide targeting the chloroplast and chromoplast. FAD is bound by residues 104 to 120 (GAGL…ADAG), alanine 108, 127 to 128 (ES), lysine 135, 152 to 153 (HI), and tyrosine 158. A substrate-binding site is contributed by arginine 293. FAD is bound at residue aspartate 524. Alanine 532 provides a ligand contact to substrate. Residue methionine 534 participates in FAD binding.

The protein belongs to the carotenoid/retinoid oxidoreductase family. In terms of assembly, homotetramer. The cofactor is FAD. Expressed more strongly in flowers than in leaves.

Its subcellular location is the plastid. It is found in the chloroplast. The protein resides in the chromoplast. The protein localises to the membrane. The catalysed reaction is 2 a plastoquinone + 15-cis-phytoene = 9,9',15-tri-cis-zeta-carotene + 2 a plastoquinol. It functions in the pathway carotenoid biosynthesis; lycopene biosynthesis. Converts phytoene into zeta-carotene via the intermediary of phytofluene by the symmetrical introduction of two double bonds at the C-11 and C-11' positions of phytoene with a concomitant isomerization of two neighboring double bonds at the C9 and C9' positions from trans to cis. In Narcissus pseudonarcissus (Daffodil), this protein is 15-cis-phytoene desaturase, chloroplastic/chromoplastic (PDS1).